Here is a 350-residue protein sequence, read N- to C-terminus: Flap endonuclease 1 (350 aa).

An N-domain region spans residues 1-102 (MGVNLKDLIP…KEIEKRRKIR (102 aa)). 7 residues coordinate Mg(2+): Asp-31, Asp-84, Glu-156, Glu-158, Asp-177, Asp-179, and Asp-240. Residues 120–262 (AARRYAMMSA…KALQLVKAYK (143 aa)) form an I-domain region. The tract at residues 341–349 (KQLGLEAWF) is interaction with PCNA.

The protein belongs to the XPG/RAD2 endonuclease family. FEN1 subfamily. Interacts with PCNA. PCNA stimulates the nuclease activity without altering cleavage specificity. Requires Mg(2+) as cofactor.

Functionally, structure-specific nuclease with 5'-flap endonuclease and 5'-3' exonuclease activities involved in DNA replication and repair. During DNA replication, cleaves the 5'-overhanging flap structure that is generated by displacement synthesis when DNA polymerase encounters the 5'-end of a downstream Okazaki fragment. Binds the unpaired 3'-DNA end and kinks the DNA to facilitate 5' cleavage specificity. Cleaves one nucleotide into the double-stranded DNA from the junction in flap DNA, leaving a nick for ligation. Also involved in the base excision repair (BER) pathway. Acts as a genome stabilization factor that prevents flaps from equilibrating into structures that lead to duplications and deletions. Also possesses 5'-3' exonuclease activity on nicked or gapped double-stranded DNA. The chain is Flap endonuclease 1 from Staphylothermus marinus (strain ATCC 43588 / DSM 3639 / JCM 9404 / F1).